The sequence spans 171 residues: ATP synthase subunit b (171 aa).

Residues 26 to 48 form a helical membrane-spanning segment; that stretch reads LINLAIIIGLLVYAGRGFLGNLL.

This sequence belongs to the ATPase B chain family. F-type ATPases have 2 components, F(1) - the catalytic core - and F(0) - the membrane proton channel. F(1) has five subunits: alpha(3), beta(3), gamma(1), delta(1), epsilon(1). F(0) has four main subunits: a(1), b(1), b'(1) and c(10-14). The alpha and beta chains form an alternating ring which encloses part of the gamma chain. F(1) is attached to F(0) by a central stalk formed by the gamma and epsilon chains, while a peripheral stalk is formed by the delta, b and b' chains.

It localises to the cellular thylakoid membrane. Functionally, f(1)F(0) ATP synthase produces ATP from ADP in the presence of a proton or sodium gradient. F-type ATPases consist of two structural domains, F(1) containing the extramembraneous catalytic core and F(0) containing the membrane proton channel, linked together by a central stalk and a peripheral stalk. During catalysis, ATP synthesis in the catalytic domain of F(1) is coupled via a rotary mechanism of the central stalk subunits to proton translocation. Its function is as follows. Component of the F(0) channel, it forms part of the peripheral stalk, linking F(1) to F(0). This Synechococcus elongatus (strain ATCC 33912 / PCC 7942 / FACHB-805) (Anacystis nidulans R2) protein is ATP synthase subunit b.